Here is a 156-residue protein sequence, read N- to C-terminus: Cytochrome c-type biogenesis protein CcmE (156 aa).

Residues Met-1 to Arg-16 are Cytoplasmic-facing. A helical; Signal-anchor for type II membrane protein membrane pass occupies residues Leu-17–Ala-37. Over Leu-38 to Lys-156 the chain is Periplasmic. 2 residues coordinate heme: His-131 and Tyr-135.

The protein belongs to the CcmE/CycJ family.

It localises to the cell inner membrane. Functionally, heme chaperone required for the biogenesis of c-type cytochromes. Transiently binds heme delivered by CcmC and transfers the heme to apo-cytochromes in a process facilitated by CcmF and CcmH. The protein is Cytochrome c-type biogenesis protein CcmE of Novosphingobium aromaticivorans (strain ATCC 700278 / DSM 12444 / CCUG 56034 / CIP 105152 / NBRC 16084 / F199).